Here is a 252-residue protein sequence, read N- to C-terminus: Phosphate import ATP-binding protein PstB 1 (252 aa).

The 242-residue stretch at 6–247 folds into the ABC transporter domain; sequence LQIRDLSVYY…PKRKETEDYI (242 aa). Position 38 to 45 (38 to 45) interacts with ATP; it reads GPSGSGKS.

Belongs to the ABC transporter superfamily. Phosphate importer (TC 3.A.1.7) family. In terms of assembly, the complex is composed of two ATP-binding proteins (PstB), two transmembrane proteins (PstC and PstA) and a solute-binding protein (PstS).

It localises to the cell membrane. The catalysed reaction is phosphate(out) + ATP + H2O = ADP + 2 phosphate(in) + H(+). In terms of biological role, part of the ABC transporter complex PstSACB involved in phosphate import. Responsible for energy coupling to the transport system. The sequence is that of Phosphate import ATP-binding protein PstB 1 from Streptococcus pyogenes serotype M1.